The chain runs to 154 residues: Putative pre-16S rRNA nuclease (154 aa).

The protein belongs to the YqgF nuclease family.

The protein resides in the cytoplasm. Could be a nuclease involved in processing of the 5'-end of pre-16S rRNA. The chain is Putative pre-16S rRNA nuclease from Rickettsia africae (strain ESF-5).